The chain runs to 123 residues: Small ribosomal subunit protein uS12 (123 aa).

The disordered stretch occupies residues 1–24; sequence MPTINQLVRKGRTPQKVKSKVPAM. The span at 9-19 shows a compositional bias: basic residues; it reads RKGRTPQKVKS. A 3-methylthioaspartic acid modification is found at aspartate 89.

Belongs to the universal ribosomal protein uS12 family. Part of the 30S ribosomal subunit. Contacts proteins S8 and S17. May interact with IF1 in the 30S initiation complex.

With S4 and S5 plays an important role in translational accuracy. In terms of biological role, interacts with and stabilizes bases of the 16S rRNA that are involved in tRNA selection in the A site and with the mRNA backbone. Located at the interface of the 30S and 50S subunits, it traverses the body of the 30S subunit contacting proteins on the other side and probably holding the rRNA structure together. The combined cluster of proteins S8, S12 and S17 appears to hold together the shoulder and platform of the 30S subunit. The polypeptide is Small ribosomal subunit protein uS12 (Sphingopyxis alaskensis (strain DSM 13593 / LMG 18877 / RB2256) (Sphingomonas alaskensis)).